Here is a 396-residue protein sequence, read N- to C-terminus: Acetate kinase (396 aa).

Residue Asn-7 participates in Mg(2+) binding. Lys-14 serves as a coordination point for ATP. Arg-88 provides a ligand contact to substrate. Catalysis depends on Asp-145, which acts as the Proton donor/acceptor. ATP-binding positions include His-205–Gly-209, Asp-279–Arg-281, and Gly-327–Asn-331. Mg(2+) is bound at residue Glu-381.

This sequence belongs to the acetokinase family. As to quaternary structure, homodimer. Requires Mg(2+) as cofactor. It depends on Mn(2+) as a cofactor.

It is found in the cytoplasm. It catalyses the reaction acetate + ATP = acetyl phosphate + ADP. Its pathway is metabolic intermediate biosynthesis; acetyl-CoA biosynthesis; acetyl-CoA from acetate: step 1/2. Functionally, catalyzes the formation of acetyl phosphate from acetate and ATP. Can also catalyze the reverse reaction. The protein is Acetate kinase of Campylobacter jejuni subsp. jejuni serotype O:2 (strain ATCC 700819 / NCTC 11168).